Reading from the N-terminus, the 370-residue chain is 3-hydroxy-3-methylglutaryl-CoA lyase, cytoplasmic (370 aa).

Glycine 2 is lipidated: N-myristoyl glycine. Positions 78–345 (VKIVEVGPRD…NTGVNLYKVM (268 aa)) constitute a Pyruvate carboxyltransferase domain. Arginine 86 serves as a coordination point for substrate. A divalent metal cation-binding residues include aspartate 87, histidine 278, and histidine 280. Cysteine 311 is a catalytic residue. Position 320 (asparagine 320) interacts with a divalent metal cation.

This sequence belongs to the HMG-CoA lyase family. The cofactor is a divalent metal cation.

It is found in the cytoplasm. The protein resides in the cytosol. The protein localises to the endoplasmic reticulum membrane. It carries out the reaction (3S)-3-hydroxy-3-methylglutaryl-CoA = acetoacetate + acetyl-CoA. The protein operates within metabolic intermediate metabolism; (S)-3-hydroxy-3-methylglutaryl-CoA degradation; acetoacetate from (S)-3-hydroxy-3-methylglutaryl-CoA: step 1/1. In terms of biological role, non-mitochondrial 3-hydroxy-3-methylglutaryl-CoA lyase that catalyzes a cation-dependent cleavage of (S)-3-hydroxy-3-methylglutaryl-CoA into acetyl-CoA and acetoacetate, a key step in ketogenesis, the products of which support energy production in nonhepatic animal tissues. This chain is 3-hydroxy-3-methylglutaryl-CoA lyase, cytoplasmic (HMGCLL1), found in Homo sapiens (Human).